A 70-amino-acid chain; its full sequence is Probable non-specific lipid-transfer protein 2 (70 aa).

4 cysteine pairs are disulfide-bonded: Cys4–Cys38, Cys12–Cys26, Cys27–Cys62, and Cys36–Cys69.

Functionally, potential phospholipid transfer protein. This Zea mays (Maize) protein is Probable non-specific lipid-transfer protein 2.